The primary structure comprises 192 residues: GTP cyclohydrolase 1 (192 aa).

Residues cysteine 76, histidine 79, and cysteine 148 each contribute to the Zn(2+) site.

This sequence belongs to the GTP cyclohydrolase I family. As to quaternary structure, toroid-shaped homodecamer, composed of two pentamers of five dimers.

The catalysed reaction is GTP + H2O = 7,8-dihydroneopterin 3'-triphosphate + formate + H(+). It functions in the pathway cofactor biosynthesis; 7,8-dihydroneopterin triphosphate biosynthesis; 7,8-dihydroneopterin triphosphate from GTP: step 1/1. The protein is GTP cyclohydrolase 1 of Carboxydothermus hydrogenoformans (strain ATCC BAA-161 / DSM 6008 / Z-2901).